Consider the following 141-residue polypeptide: Large ribosomal subunit protein uL14 (141 aa).

This sequence belongs to the universal ribosomal protein uL14 family.

The protein is Large ribosomal subunit protein uL14 (RPL23) of Tetrahymena thermophila (strain SB210).